The following is a 650-amino-acid chain: DNA ligase (650 aa).

NAD(+) is bound by residues 30-34 (DEEYD), 79-80 (SL), and D108. The active-site N6-AMP-lysine intermediate is the K110. Residues R131, E165, and K304 each contribute to the NAD(+) site. Zn(2+)-binding residues include C398, C401, C414, and C419. The 78-residue stretch at 573-650 (PQDSPIAGKS…EEELGEILES (78 aa)) folds into the BRCT domain.

The protein belongs to the NAD-dependent DNA ligase family. LigA subfamily. Mg(2+) is required as a cofactor. It depends on Mn(2+) as a cofactor.

It catalyses the reaction NAD(+) + (deoxyribonucleotide)n-3'-hydroxyl + 5'-phospho-(deoxyribonucleotide)m = (deoxyribonucleotide)n+m + AMP + beta-nicotinamide D-nucleotide.. Functionally, DNA ligase that catalyzes the formation of phosphodiester linkages between 5'-phosphoryl and 3'-hydroxyl groups in double-stranded DNA using NAD as a coenzyme and as the energy source for the reaction. It is essential for DNA replication and repair of damaged DNA. The sequence is that of DNA ligase from Wolinella succinogenes (strain ATCC 29543 / DSM 1740 / CCUG 13145 / JCM 31913 / LMG 7466 / NCTC 11488 / FDC 602W) (Vibrio succinogenes).